The chain runs to 104 residues: Phosphoribosyl-ATP pyrophosphatase (104 aa).

It belongs to the PRA-PH family.

It is found in the cytoplasm. It carries out the reaction 1-(5-phospho-beta-D-ribosyl)-ATP + H2O = 1-(5-phospho-beta-D-ribosyl)-5'-AMP + diphosphate + H(+). Its pathway is amino-acid biosynthesis; L-histidine biosynthesis; L-histidine from 5-phospho-alpha-D-ribose 1-diphosphate: step 2/9. This chain is Phosphoribosyl-ATP pyrophosphatase, found in Streptococcus thermophilus (strain ATCC BAA-491 / LMD-9).